Consider the following 159-residue polypeptide: Large ribosomal subunit protein mL43 (159 aa).

The interval 123–159 is disordered; that stretch reads SPSIQGQWHPFTNKPTALGGLRPREVQNPAPTQRPAQ.

It belongs to the mitochondrion-specific ribosomal protein mL43 family. In terms of assembly, component of the mitochondrial ribosome large subunit (39S) which comprises a 16S rRNA and about 50 distinct proteins.

The protein localises to the mitochondrion. This chain is Large ribosomal subunit protein mL43 (MRPL43), found in Bos taurus (Bovine).